Here is an 84-residue protein sequence, read N- to C-terminus: Kunitz-type serine protease inhibitor 2 (84 aa).

An N-terminal signal peptide occupies residues 1–24; it reads MSSGGLLLLLGLLTLWAEPTPISG. Position 25 is a pyrrolidone carboxylic acid (glutamine 25). The BPTI/Kunitz inhibitor domain occupies 31-81; sequence CFLRPDFGRYGHPRPRFYYNPATNQCQGFLAQRSRENTNNFDTRDKCRQTC. 2 cysteine pairs are disulfide-bonded: cysteine 31-cysteine 81 and cysteine 56-cysteine 77.

Belongs to the venom Kunitz-type family. In terms of tissue distribution, expressed by the venom gland.

It is found in the secreted. Serine protease inhibitor. This Daboia russelii (Russel's viper) protein is Kunitz-type serine protease inhibitor 2.